The primary structure comprises 240 residues: Type II restriction enzyme DdeI (240 aa).

The enzyme catalyses Endonucleolytic cleavage of DNA to give specific double-stranded fragments with terminal 5'-phosphates.. Its function is as follows. A P subtype restriction enzyme that recognizes the double-stranded sequence 5'-CTNAG-3' and cleaves after C-1. This chain is Type II restriction enzyme DdeI (ddeIR), found in Desulfomicrobium norvegicum (strain DSM 1741 / NCIMB 8310) (Desulfovibrio baculatus (strain Norway 4)).